We begin with the raw amino-acid sequence, 41 residues long: Conotoxin Ac4.2 (41 aa).

Positions 1 to 11 (FDGRNAAVNER) are excised as a propeptide. Pro-13 is modified (4-hydroxyproline). Thr-18 and Thr-20 each carry an O-linked (HexNAc...) threonine glycan. 4-hydroxyproline occurs at positions 29 and 33. Position 40 is a cysteine amide (Cys-40).

The protein belongs to the conotoxin A superfamily. Post-translationally, contains 3 disulfide bonds. In terms of tissue distribution, expressed by the venom duct.

The protein localises to the secreted. In terms of biological role, probable neurotoxin with ion channel inhibitor activity. The protein is Conotoxin Ac4.2 of Conus achatinus (Little frog cone).